The chain runs to 163 residues: uncharacterized protein (163 aa).

Positions 1-10 (MGVPRAREGR) are enriched in basic and acidic residues. Residues 1–163 (MGVPRAREGR…WSFTPLRWGS (163 aa)) form a disordered region.

This is an uncharacterized protein from Homo sapiens (Human).